An 879-amino-acid polypeptide reads, in one-letter code: Levansucrase (879 aa).

Positions 1-37 are cleaved as a signal peptide; it reads MTKEHKKMYKAGKYWAVATLVSASILMEVGVTTHADA. 7 repeat units span residues 66–81, 82–97, 98–113, 114–129, 130–145, 146–161, and 162–177. Positions 66 to 177 are 7 X 16 AA tandem repeats of D-N-A-T-S-G-S-T-K-Q-E-S-S-[IV]-A-N; that stretch reads DNATSGSTKQ…STKQESSVAN (112 aa). Composition is skewed to polar residues over residues 66 to 180 and 189 to 213; these read DNAT…NDTK and NTSN…AATQ. The segment at 66-213 is disordered; that stretch reads DNATSGSTKQ…NNEQPSAATQ (148 aa). Tryptophan 311, aspartate 312, and serine 382 together coordinate sucrose. The Nucleophile role is filled by aspartate 312. Aspartate 460 provides a ligand contact to Ca(2+). 2 residues coordinate sucrose: arginine 465 and aspartate 466. Residues glutamine 491, leucine 528, asparagine 530, and aspartate 562 each coordinate Ca(2+). Glutamate 563 contacts sucrose. Glutamate 565 serves as the catalytic Proton donor/acceptor. Arginine 583 serves as a coordination point for sucrose. Positions 743–830 are disordered; the sequence is SSGLGLKPHQ…TPAKPVQAGQ (88 aa). Positions 754 to 821 are enriched in polar residues; that stretch reads VNPSQPTTPA…KPVNPSQPTT (68 aa). Positions 841–845 match the LPXTG sorting signal motif; that stretch reads LPQTG. Threonine 844 is modified (pentaglycyl murein peptidoglycan amidated threonine). Residues 845-879 constitute a propeptide, removed by sortase; the sequence is GENNSQSQTMSFIGILLAMFGSLLGFLGIKKRRND.

The protein belongs to the glycosyl hydrolase 68 family.

It is found in the secreted. The protein localises to the cell wall. It carries out the reaction [6)-beta-D-fructofuranosyl-(2-&gt;](n) alpha-D-glucopyranoside + sucrose = [6)-beta-D-fructofuranosyl-(2-&gt;](n+1) alpha-D-glucopyranoside + D-glucose. Its activity is regulated as follows. Ca(2+) may play an important structural role and promote stability of levansucrase. In terms of biological role, fructosyltransferase that catalyzes the polymerization of the fructose moiety of sucrose to produce levan polymer and the fructo-oligosaccharide (FOS) 1-kestose. Also displays sucrose hydrolase activity. The chain is Levansucrase from Fructilactobacillus sanfranciscensis (Lactobacillus sanfranciscensis).